The chain runs to 229 residues: Triosephosphate isomerase (229 aa).

6-8 (NLK) is a binding site for substrate. Catalysis depends on histidine 85, which acts as the Electrophile. Glutamate 152 serves as the catalytic Proton acceptor. 2 residues coordinate substrate: glycine 158 and serine 188.

Belongs to the triosephosphate isomerase family. In terms of assembly, homodimer.

Its subcellular location is the cytoplasm. The catalysed reaction is D-glyceraldehyde 3-phosphate = dihydroxyacetone phosphate. Its pathway is carbohydrate biosynthesis; gluconeogenesis. It participates in carbohydrate degradation; glycolysis; D-glyceraldehyde 3-phosphate from glycerone phosphate: step 1/1. Involved in the gluconeogenesis. Catalyzes stereospecifically the conversion of dihydroxyacetone phosphate (DHAP) to D-glyceraldehyde-3-phosphate (G3P). This is Triosephosphate isomerase from Campylobacter curvus (strain 525.92).